The primary structure comprises 365 residues: Myocyte-specific enhancer factor 2B (365 aa).

Residues 3–57 (RKKIQISRILDQRNRQVTFTKRKFGLMKKAYELSVLCDCEIALIIFNSANRLFQY) form the MADS-box domain. A DNA-binding region (mef2-type) is located at residues 58-86 (ASTDMDRVLLKYTEYSEPHESRTNTDILE). 3 disordered regions span residues 94–124 (GLDG…GDPA), 142–309 (VVYG…SPGP), and 321–365 (AGCP…KTQQ). The segment covering 98–108 (PELEPDEGPEE) has biased composition (acidic residues). Over residues 223–240 (NTSRSLYSGLQNPCSTAT) the composition is skewed to polar residues. 2 stretches are compositionally biased toward low complexity: residues 277-289 (PQSA…SLRP) and 326-346 (PTAG…SPGT). The span at 354–365 (TSLQASSEKTQQ) shows a compositional bias: polar residues.

This sequence belongs to the MEF2 family. As to quaternary structure, interacts with HDAC7. Heterodimer. Interacts with HDAC9. In terms of tissue distribution, expressed in skeletal and cardiac muscle and brain.

The protein resides in the nucleus. Transcriptional activator which binds specifically to the MEF2 element, 5'-YTA[AT](4)TAR-3', found in numerous muscle-specific genes. Activates transcription via this element. May be involved in muscle-specific and/or growth factor-related transcription. This is Myocyte-specific enhancer factor 2B (MEF2B) from Homo sapiens (Human).